We begin with the raw amino-acid sequence, 853 residues long: Auxin response factor 23 (853 aa).

Residues 121 to 141 (KQQEDNGSTEEEVPSAPAAGH) are disordered. Positions 149–251 (FCKTLTASDT…ELRVGVRRAM (103 aa)) form a DNA-binding region, TF-B3. Disordered stretches follow at residues 422 to 471 (ESEP…NNTP) and 647 to 723 (PAKS…QGVS). Polar residues predominate over residues 425-455 (PNGTQRTFQTQENATPKSGFGNSSELESAQK). Basic and acidic residues predominate over residues 672–686 (EWRRPDVTEVEKCSD). Over residues 706–723 (PSSQQASRNMSCKSQGVS) the composition is skewed to polar residues. The PB1 domain occupies 725 to 809 (RSCKKVHKQG…HKIFIYTREE (85 aa)). Positions 815–853 (PGTLNSRSEDSHANSMERGSVGREMRGCLSTSSLNSENC) are disordered. Residues 843–853 (LSTSSLNSENC) show a composition bias toward polar residues.

The protein belongs to the ARF family. Homodimers and heterodimers.

Its subcellular location is the nucleus. Functionally, auxin response factors (ARFs) are transcriptional factors that bind specifically to the DNA sequence 5'-TGTCTC-3' found in the auxin-responsive promoter elements (AuxREs). This chain is Auxin response factor 23 (ARF23), found in Oryza sativa subsp. indica (Rice).